Reading from the N-terminus, the 491-residue chain is Trigger factor (491 aa).

The PPIase FKBP-type domain maps to 173–260 (GDVAVVSFSG…LDELKGRELP (88 aa)). The segment at 435-491 (MVDPASEDKPAKASKAKSSKAKAEKEPAAEGQAKAKPAAKTSKSKTKAAEKLITPID) is disordered. A compositionally biased stretch (low complexity) spans 463-475 (AEGQAKAKPAAKT).

Belongs to the FKBP-type PPIase family. Tig subfamily.

It localises to the cytoplasm. The enzyme catalyses [protein]-peptidylproline (omega=180) = [protein]-peptidylproline (omega=0). Its function is as follows. Involved in protein export. Acts as a chaperone by maintaining the newly synthesized protein in an open conformation. Functions as a peptidyl-prolyl cis-trans isomerase. This Synechococcus sp. (strain RCC307) protein is Trigger factor.